Reading from the N-terminus, the 438-residue chain is Proline--tRNA ligase (438 aa).

The protein belongs to the class-II aminoacyl-tRNA synthetase family. ProS type 2 subfamily. Homodimer.

It is found in the cytoplasm. The catalysed reaction is tRNA(Pro) + L-proline + ATP = L-prolyl-tRNA(Pro) + AMP + diphosphate. Its function is as follows. Catalyzes the attachment of proline to tRNA(Pro) in a two-step reaction: proline is first activated by ATP to form Pro-AMP and then transferred to the acceptor end of tRNA(Pro). This chain is Proline--tRNA ligase, found in Rhodopseudomonas palustris (strain TIE-1).